Consider the following 574-residue polypeptide: Laccase-12 (574 aa).

The first 27 residues, 1–27, serve as a signal peptide directing secretion; the sequence is MAAASSVLRCCLLVAALMTLSAMGAEA. Plastocyanin-like domains are found at residues 35–151 and 161–314; these read DVQT…PPAG and EEVP…YDDP. N-linked (GlcNAc...) asparagine glycosylation is present at Asn-81. Residues His-85, His-87, His-130, and His-132 each contribute to the Cu cation site. N-linked (GlcNAc...) asparagine glycosylation is found at Asn-173, Asn-190, Asn-206, Asn-242, Asn-302, Asn-335, Asn-342, Asn-381, Asn-388, Asn-398, Asn-434, Asn-441, and Asn-447. The 135-residue stretch at 424–558 folds into the Plastocyanin-like 3 domain; the sequence is NFPYYPLNPF…KMAWLVLDGS (135 aa). His-475, His-478, His-480, His-537, Cys-538, His-539, and His-543 together coordinate Cu cation.

The protein belongs to the multicopper oxidase family. The cofactor is Cu cation.

It localises to the secreted. It is found in the extracellular space. The protein resides in the apoplast. The enzyme catalyses 4 hydroquinone + O2 = 4 benzosemiquinone + 2 H2O. In terms of biological role, lignin degradation and detoxification of lignin-derived products. The polypeptide is Laccase-12 (LAC12) (Oryza sativa subsp. japonica (Rice)).